Here is a 334-residue protein sequence, read N- to C-terminus: Guanine nucleotide-binding protein subunit beta-like protein (334 aa).

WD repeat units lie at residues 14–55 (GHKD…DSEF), 65–104 (GHSKRINGLDVSKDGNMMVTVGSDGIGRIWDTESKKSILL), 106–145 (GHGRDVLCVSINSNDTKIVTGSVDRTMNLYNTKGDLVLKM), 152–192 (MHRG…HLQT), 215–256 (DESK…QSFD), and 257–294 (AIVPVRSIAVGETEPVIALGTDESVIIWETISSRVIAS).

The protein belongs to the WD repeat G protein beta family.

The sequence is that of Guanine nucleotide-binding protein subunit beta-like protein from Encephalitozoon cuniculi (strain GB-M1) (Microsporidian parasite).